We begin with the raw amino-acid sequence, 490 residues long: Betaine aldehyde dehydrogenase (490 aa).

Residue D93 participates in K(+) binding. 150 to 152 (GAW) is an NAD(+) binding site. K162 serves as the catalytic Charge relay system. 176 to 179 (KPSE) contributes to the NAD(+) binding site. Residue V180 coordinates K(+). 230-233 (GVKT) serves as a coordination point for NAD(+). L246 provides a ligand contact to K(+). E252 serves as the catalytic Proton acceptor. Residues G254, C286, and E387 each contribute to the NAD(+) site. Catalysis depends on C286, which acts as the Nucleophile. Residue C286 is modified to Cysteine sulfenic acid (-SOH). The K(+) site is built by K457 and G460. The Charge relay system role is filled by E464.

It belongs to the aldehyde dehydrogenase family. Dimer of dimers. K(+) is required as a cofactor.

The catalysed reaction is betaine aldehyde + NAD(+) + H2O = glycine betaine + NADH + 2 H(+). It functions in the pathway amine and polyamine biosynthesis; betaine biosynthesis via choline pathway; betaine from betaine aldehyde: step 1/1. Its function is as follows. Involved in the biosynthesis of the osmoprotectant glycine betaine. Catalyzes the irreversible oxidation of betaine aldehyde to the corresponding acid. This is Betaine aldehyde dehydrogenase from Serratia proteamaculans (strain 568).